Here is a 220-residue protein sequence, read N- to C-terminus: UPF0319 protein YccT (220 aa).

An N-terminal signal peptide occupies residues 1 to 20 (MKTGALTTFLALCLPVTVFA).

It belongs to the UPF0319 family.

The sequence is that of UPF0319 protein YccT from Salmonella dublin (strain CT_02021853).